Consider the following 429-residue polypeptide: Glutamate-1-semialdehyde 2,1-aminomutase 2 (429 aa).

The residue at position 268 (lysine 268) is an N6-(pyridoxal phosphate)lysine.

The protein belongs to the class-III pyridoxal-phosphate-dependent aminotransferase family. HemL subfamily. Homodimer. Pyridoxal 5'-phosphate serves as cofactor.

The protein resides in the cytoplasm. It carries out the reaction (S)-4-amino-5-oxopentanoate = 5-aminolevulinate. Its pathway is porphyrin-containing compound metabolism; protoporphyrin-IX biosynthesis; 5-aminolevulinate from L-glutamyl-tRNA(Glu): step 2/2. In Bacillus thuringiensis (strain Al Hakam), this protein is Glutamate-1-semialdehyde 2,1-aminomutase 2.